The primary structure comprises 246 residues: 3-deoxy-manno-octulosonate cytidylyltransferase (246 aa).

This sequence belongs to the KdsB family.

The protein localises to the cytoplasm. The catalysed reaction is 3-deoxy-alpha-D-manno-oct-2-ulosonate + CTP = CMP-3-deoxy-beta-D-manno-octulosonate + diphosphate. Its pathway is nucleotide-sugar biosynthesis; CMP-3-deoxy-D-manno-octulosonate biosynthesis; CMP-3-deoxy-D-manno-octulosonate from 3-deoxy-D-manno-octulosonate and CTP: step 1/1. It participates in bacterial outer membrane biogenesis; lipopolysaccharide biosynthesis. In terms of biological role, activates KDO (a required 8-carbon sugar) for incorporation into bacterial lipopolysaccharide in Gram-negative bacteria. This Rickettsia prowazekii (strain Madrid E) protein is 3-deoxy-manno-octulosonate cytidylyltransferase.